The primary structure comprises 203 residues: High-molecular weight cobalt-containing nitrile hydratase subunit alpha (203 aa).

Co(3+)-binding residues include cysteine 102, cysteine 105, serine 106, and cysteine 107.

This sequence belongs to the nitrile hydratase subunit alpha family. In terms of assembly, heterodimer of an alpha and a beta chain. Co(3+) serves as cofactor.

It catalyses the reaction an aliphatic primary amide = an aliphatic nitrile + H2O. In terms of biological role, NHase catalyzes the hydration of various nitrile compounds to the corresponding amides. This chain is High-molecular weight cobalt-containing nitrile hydratase subunit alpha (nhhA), found in Rhodococcus rhodochrous.